We begin with the raw amino-acid sequence, 380 residues long: Cytochrome b (380 aa).

4 consecutive transmembrane segments (helical) span residues 34–54 (FGSLLALCLMTQILTGLLLAM), 78–99 (WLIRNMHANGASFFFICIYMHI), 114–134 (WNTGVLLLLTLMATAFVGYVL), and 179–199 (FFALHFLLPFMIAGLTLIHLT). Heme b contacts are provided by His-84 and His-98. Heme b-binding residues include His-183 and His-197. His-202 contacts a ubiquinone. 4 helical membrane-spanning segments follow: residues 227–247 (LKDILGLALLLLPLTTMALFS), 289–309 (LGGVLALAASVLVLFLSPLLH), 321–341 (LSQLLFWTLVANLFILTWIGS), and 348–368 (FIIIGQLASTTYFTILLILFP).

It belongs to the cytochrome b family. The cytochrome bc1 complex contains 11 subunits: 3 respiratory subunits (MT-CYB, CYC1 and UQCRFS1), 2 core proteins (UQCRC1 and UQCRC2) and 6 low-molecular weight proteins (UQCRH/QCR6, UQCRB/QCR7, UQCRQ/QCR8, UQCR10/QCR9, UQCR11/QCR10 and a cleavage product of UQCRFS1). This cytochrome bc1 complex then forms a dimer. Requires heme b as cofactor.

The protein localises to the mitochondrion inner membrane. Functionally, component of the ubiquinol-cytochrome c reductase complex (complex III or cytochrome b-c1 complex) that is part of the mitochondrial respiratory chain. The b-c1 complex mediates electron transfer from ubiquinol to cytochrome c. Contributes to the generation of a proton gradient across the mitochondrial membrane that is then used for ATP synthesis. This is Cytochrome b (MT-CYB) from Oceanodroma furcata (Fork-tailed storm-petrel).